A 191-amino-acid polypeptide reads, in one-letter code: Peptidyl-tRNA hydrolase (191 aa).

Y14 is a tRNA binding site. The active-site Proton acceptor is H19. 3 residues coordinate tRNA: F64, N66, and N112.

This sequence belongs to the PTH family. As to quaternary structure, monomer.

Its subcellular location is the cytoplasm. The enzyme catalyses an N-acyl-L-alpha-aminoacyl-tRNA + H2O = an N-acyl-L-amino acid + a tRNA + H(+). In terms of biological role, hydrolyzes ribosome-free peptidyl-tRNAs (with 1 or more amino acids incorporated), which drop off the ribosome during protein synthesis, or as a result of ribosome stalling. Catalyzes the release of premature peptidyl moieties from peptidyl-tRNA molecules trapped in stalled 50S ribosomal subunits, and thus maintains levels of free tRNAs and 50S ribosomes. This Novosphingobium aromaticivorans (strain ATCC 700278 / DSM 12444 / CCUG 56034 / CIP 105152 / NBRC 16084 / F199) protein is Peptidyl-tRNA hydrolase.